We begin with the raw amino-acid sequence, 489 residues long: Protein LMBR1L (489 aa).

Over 1-21 (MEAADYEVLSVREQLFHDRVR) the chain is Extracellular. Positions 1–59 (MEAADYEVLSVREQLFHDRVRECIISILLFATLYILCHIFLTRFKKPAEFTTVDDEDAT) are interaction with LGB. Residues 1–76 (MEAADYEVLS…LCTFTLAVAL (76 aa)) are LCN1-binding. Residues 22-42 (ECIISILLFATLYILCHIFLT) form a helical membrane-spanning segment. Topologically, residues 43–66 (RFKKPAEFTTVDDEDATVNKIALE) are cytoplasmic. A helical membrane pass occupies residues 67 to 87 (LCTFTLAVALGAVLLLPFSII). Topologically, residues 88-114 (SNEVLLSLPRNYYIQWLNGSLIHGLWN) are extracellular. Residues 115 to 135 (LVFLFSNLSLVFLMPFAYFFT) form a helical membrane-spanning segment. At 136 to 154 (ESEGFAGSRKGVLGRVYET) the chain is on the cytoplasmic side. The chain crosses the membrane as a helical span at residues 155-175 (VVMLILLTLLVLGMVWVASAI). At 176–196 (VDNDKASRESLYDFWEYYLPY) the chain is on the extracellular side. A helical transmembrane segment spans residues 197–217 (LYSCISFLGVLLLLVCTPLGL). Residues 218-305 (ARMFSVTGKL…NLGYPLAMLC (88 aa)) are Cytoplasmic-facing. A helical membrane pass occupies residues 306–326 (LLVLTGLSVLIVAVHILELLI). The Extracellular portion of the chain corresponds to 327–350 (DEAAMPRGMQDAALGQASFSKLGS). Residues 351–371 (FGAIIQVVLIFYLMVSSVVGF) form a helical membrane-spanning segment. Over 372–388 (YSSPLFGSLRPRWHDTS) the chain is Cytoplasmic. The chain crosses the membrane as a helical span at residues 389 to 409 (MTQIIGNCVCLLVLSSALPVF). The Extracellular portion of the chain corresponds to 410-431 (SRTLGLTRFDLLGDFGRFNWLG). A helical membrane pass occupies residues 432-452 (NFYIVFLYNAAFAGLTTLCLV). Residues 453 to 489 (KTFTAAVRAELIRAFGLDRLPLPVSGFPRASRKKQHQ) are Cytoplasmic-facing.

This sequence belongs to the LIMR family. As to quaternary structure, dimer. Can also form higher oligomers. Interacts with LCN1; this interaction mediates the endocytosis of LCN1. Interacts with UBAC2, FAF2, VCP, AMFR, ZNRF3, CTNNB1, LRP6, GSK3B, FZD6, DVL2 and RNF43. Interacts with GSK3A. Interaction with LGB and SCGB1A1 is controversial. As to expression, highly expressed in the bone marrow, thymus, spleen and lymphocytes.

It is found in the cell membrane. It localises to the endoplasmic reticulum membrane. Plays an essential role in lymphocyte development by negatively regulating the canonical Wnt signaling pathway. In association with UBAC2 and E3 ubiquitin-protein ligase AMFR, promotes the ubiquitin-mediated degradation of CTNNB1 and Wnt receptors FZD6 and LRP6. LMBR1L stabilizes the beta-catenin destruction complex that is required for regulating CTNNB1 levels. Acts as a LCN1 receptor and can mediate its endocytosis. This Mus musculus (Mouse) protein is Protein LMBR1L (Lmbr1l).